Consider the following 504-residue polypeptide: L-amino-acid oxidase (504 aa).

A signal peptide spans 1–18 (MNVFFMFSLLFLAALGSC). Cysteines 28 and 191 form a disulfide. Residues 61–62 (MS), 81–82 (EA), R89, and 105–108 (GPMR) contribute to the FAD site. R108 lines the substrate pocket. N-linked (GlcNAc...) asparagine glycosylation is present at N190. A substrate-binding site is contributed by H241. An FAD-binding site is contributed by V279. C349 and C430 are oxidised to a cystine. A glycan (N-linked (GlcNAc...) asparagine) is linked at N379. Y390 is a substrate binding site. FAD-binding positions include E475 and 482-487 (GWIDST). Substrate is bound at residue 482 to 483 (GW).

Belongs to the flavin monoamine oxidase family. FIG1 subfamily. In terms of assembly, homodimer; non-covalently linked. FAD serves as cofactor. Expressed by the venom gland.

It localises to the secreted. The enzyme catalyses an L-alpha-amino acid + O2 + H2O = a 2-oxocarboxylate + H2O2 + NH4(+). It carries out the reaction L-leucine + O2 + H2O = 4-methyl-2-oxopentanoate + H2O2 + NH4(+). Its function is as follows. Catalyzes an oxidative deamination of predominantly hydrophobic and aromatic L-amino acids, thus producing hydrogen peroxide that may contribute to the diverse toxic effects of this enzyme. Shows activity on L-Leu. Exhibits diverse biological activities, such as apoptosis, and inhibition of agonist- and shear stress-induced platelet aggregation (SIPA). Effects of snake L-amino oxidases on platelets are controversial, since they either induce aggregation or inhibit agonist-induced aggregation. These different effects are probably due to different experimental conditions. This protein may also induce hemorrhage, hemolysis, edema, antibacterial and antiparasitic activities. This chain is L-amino-acid oxidase, found in Gloydius blomhoffii (Mamushi).